Reading from the N-terminus, the 114-residue chain is Cuticle protein AMP5 (114 aa).

At Gln-1 the chain carries Pyrrolidone carboxylic acid. The region spanning 18–83 (AGNYFYEFET…VDSPLIPVAP (66 aa)) is the Chitin-binding type R&amp;R domain.

In terms of tissue distribution, arthrodial membrane.

The polypeptide is Cuticle protein AMP5 (Homarus americanus (American lobster)).